The primary structure comprises 1716 residues: MDQEGGGDGQKAPSFQWRNYKLIVDPALDPALRRPSQKVYRYDGVHFSVSDSKYTPVEDLQDPRCHVRSKARDFSLPVPKFKLDEFYIGQIPLKEVTFARLNDNVRETFLKDMCRKYGEVEEVEILLHPRTRKHLGLARVLFTSTRGAKETVKNLHLTSVMGNIIHAQLDIKGQQRMKYYELIVNGSYTPQTVPTGGKALSEKFQGSGAAAETTEARRRSSSDTAAYPAGTTVGGTPGNGTPCSQDTNFSSSRQDTPSSFGQFTPQSSQGTPYTSRGSTPYSQDSAYSSSTTSTSFKPRRSENSYQDSFSRRHFSTSSAPATTATATSATAAATAASSSSSSSSSSSSSSSSSSSASQFRGSDSSYPAYYESWNRYQRHTSYPPRRATREDPSGASFAENTAERFPPSYTSYLAPEPNRSTDQDYRPPASEAPPPEPPEPGGGGGGSGGGGGGGGGGGGGAPSPEREEARTPPRPASPARSGSPAPETTNESVPFAQHSSLDSRIEMLLKEQRSKFSFLASDTEEEEENSSAGPGARDAGAEVPSGAGHGPCTPPPAPANFEDVAPTGSGEPGAARESPKANGQNQASPCSSGEDMEISDDDRGGSPPPAPTPPQQPPPPPPPPPPPPPPYLASLPLGYPPHQPAYLLPPRPDGPPPPEYPPPPPPPPPHIYDFVNSLELMDRLGAQWGGMPMSFQMQTQMLTRLHQLRQGKGLTAASAGPPGGAFGEAFLPFPPPQEAAYGLPYALYTQGQEGRGSYSREAYHLPLPMAAEPLPSSSVSGEEARLPHREEAEIAESKVLPSAGTVGRVLATLVQEMKSIMQRDLNRKMVENVAFGAFDQWWESKEEKAKPFQNAAKQQAKEEDKEKMKLKEPGMLSLVDWAKSGGITGIEAFAFGSGLRGALRLPSFKVKRKEPSEISEASEEKRPRPSTPAEEDEDDPEREKEAGEPGRPGTKPPKRDEERGKTQGKHRKSFTLDSEGEEASQESSSEKDEDDDDEDEEDEEQEEAVDATKKEAEASDGEDEDSDSSSQCSLYADSDGENGSTSDSESGSSSSSSSSSSSSSSSSSSESSSEEEEQSAVIPSASPPREVPEPLPAPDEKPETDGLVDSPVMPLSEKETLPTQPAGPAEEPPPSVPQPPAEPPAGPPDAAPRLDERPSSPIPLLPPPKKRRKTVSFSAAEEAPVPEPSTAAPLQAKSSGPVSRKVPRVVERTIRNLPLDHASLVKSWPEEVARGGRNRAGGRVRSTEEEEATESGTEVDLAVLADLALTPARRGLATLPTGDDSEATETSDEAERPSPLLSHILLEHNYALAIKPPPTTPAPRPLEPAPALAALFSSPADEVLEAPEVVVAEAEEPKQQLQQQHPEQEGEEEEEDEEEESESSESSSSSSSDEEGAIRRRSLRSHTRRRRPPLPPPPPPPPSFEPRSEFEQMTILYDIWNSGLDLEDMSYLRLTYERLLQQTSGADWLNDTHWVQHTITNLSTPKRKRRPQDGPREHQTGSARSEGYYPISKKEKDKYLDVCPVSARQLEGGDTQGTNRVLSERRSEQRRLLSAIGTSAIMDSDLLKLNQLKFRKKKLRFGRSRIHEWGLFAMEPIAADEMVIEYVGQNIRQMVADMREKRYVQEGIGSSYLFRVDHDTIIDATKCGNLARFINHCCTPNCYAKVITIESQKKIVIYSKQPIGVDEEITYDYKFPLEDNKIPCLCGTESCRGSLN.

An interaction with WDR82 region spans residues 60-89 (LQDPRCHVRSKARDFSLPVPKFKLDEFYIG). One can recognise an RRM domain in the interval 84 to 172 (DEFYIGQIPL…NIIHAQLDIK (89 aa)). Disordered stretches follow at residues 194–367 (PTGG…SSYP), 380–499 (TSYP…AQHS), 516–670 (FSFL…PPPH), 849–869 (AKPF…EKMK), 911–1206 (KRKE…SRKV), 1230–1259 (EEVA…GTEV), and 1275–1297 (GLAT…AERP). The segment covering 222 to 231 (SDTAAYPAGT) has biased composition (low complexity). Residues 243-277 (CSQDTNFSSSRQDTPSSFGQFTPQSSQGTPYTSRG) show a composition bias toward polar residues. Composition is skewed to low complexity over residues 278-295 (STPY…TSTS) and 315-357 (STSS…SSAS). A compositionally biased stretch (pro residues) spans 430 to 440 (SEAPPPEPPEP). The segment covering 441–461 (GGGGGGSGGGGGGGGGGGGGA) has biased composition (gly residues). Serine 477 bears the Phosphoserine mark. Low complexity predominate over residues 477-487 (SPARSGSPAPE). Polar residues predominate over residues 488-499 (TTNESVPFAQHS). Serine 521 and serine 578 each carry phosphoserine. Residues 581 to 591 (ANGQNQASPCS) show a composition bias toward polar residues. Composition is skewed to pro residues over residues 606-631 (SPPP…PPPY) and 638-670 (GYPP…PPPH). The segment covering 859–869 (QAKEEDKEKMK) has biased composition (basic and acidic residues). Serine 930 carries the phosphoserine modification. 2 stretches are compositionally biased toward acidic residues: residues 991-1009 (KDED…EEAV) and 1018-1027 (ASDGEDEDSD). Low complexity predominate over residues 1028 to 1071 (SSSQCSLYADSDGENGSTSDSESGSSSSSSSSSSSSSSSSSSES). Position 1110 is a phosphoserine (serine 1110). The segment covering 1130–1150 (EEPPPSVPQPPAEPPAGPPDA) has biased composition (pro residues). Acidic residues predominate over residues 1283 to 1292 (DDSEATETSD). The HCFC1-binding motif (HBM) motif lies at 1307-1311 (EHNYA). Disordered stretches follow at residues 1355–1427 (EEPK…FEPR) and 1480–1508 (TNLS…SEGY). A compositionally biased stretch (acidic residues) spans 1369–1383 (EGEEEEEDEEEESES). Over residues 1399 to 1412 (RRRSLRSHTRRRRP) the composition is skewed to basic residues. The span at 1413–1424 (PLPPPPPPPPSF) shows a compositional bias: pro residues. An interaction with CFP1 region spans residues 1424–1459 (FEPRSEFEQMTILYDIWNSGLDLEDMSYLRLTYERL). Positions 1459 to 1546 (LLQQTSGADW…GTNRVLSERR (88 aa)) are interaction with ASH2L, RBBP5 and WDR5. Residues 1501 to 1506 (GSARSE) carry the WDR5 interaction motif (WIN) motif. The RxxxRR motif signature appears at 1546–1551 (RSEQRR). An SET domain is found at 1577-1694 (KKLRFGRSRI…VDEEITYDYK (118 aa)). S-adenosyl-L-methionine is bound at residue tyrosine 1693. In terms of domain architecture, Post-SET spans 1700 to 1716 (NKIPCLCGTESCRGSLN).

This sequence belongs to the class V-like SAM-binding methyltransferase superfamily. Component of the SET1A/COMPASS complex composed of the catalytic subunit SETD1A, WDR5, WDR82, RBBP5, ASH2L/ASH2, CXXC1/CFP1, HCFC1 and DPY30 homotrimer. Forms a core complex with the evolutionary conserved subcomplex WRAD composed of WDR5, RBBP5, ASH2L/ASH2 and DPY30 subunits; WRAD differentially stimulates the methyltransferase activity. Interacts with BOD1L1 (via COMPASS-Shg1 domain) at replication forks. Interacts with HCFC1. Interacts with ASH2/ASH2L. Interacts with CXXC1/CFP1. Interacts with RBBP5. Interacts (via N-terminal region) with WDR82; the interaction is direct. Interacts (via the RRM domain) with hyperphosphorylated C-terminal domain (CTD) of RNA polymerase II large subunit (POLR2A) only in the presence of WDR82. Binds specifically to CTD heptad repeats phosphorylated on 'Ser-5' of each heptad. Interacts with ZNF335. Interacts with SUPT6H. Interacts with NAP1L1. Interacts (via WIN motif) with WDR5.

It is found in the nucleus. It localises to the nucleus speckle. The protein resides in the chromosome. Its subcellular location is the cytoplasm. The catalysed reaction is L-lysyl(4)-[histone H3] + S-adenosyl-L-methionine = N(6)-methyl-L-lysyl(4)-[histone H3] + S-adenosyl-L-homocysteine + H(+). The enzyme catalyses N(6)-methyl-L-lysyl(4)-[histone H3] + S-adenosyl-L-methionine = N(6),N(6)-dimethyl-L-lysyl(4)-[histone H3] + S-adenosyl-L-homocysteine + H(+). It catalyses the reaction N(6),N(6)-dimethyl-L-lysyl(4)-[histone H3] + S-adenosyl-L-methionine = N(6),N(6),N(6)-trimethyl-L-lysyl(4)-[histone H3] + S-adenosyl-L-homocysteine + H(+). Histone methyltransferase that catalyzes methyl group transfer from S-adenosyl-L-methionine to the epsilon-amino group of 'Lys-4' of histone H3 (H3K4) via a non-processive mechanism. Part of chromatin remodeling machinery, forms H3K4me1, H3K4me2 and H3K4me3 methylation marks at active chromatin sites where transcription and DNA repair take place. Responsible for H3K4me3 enriched promoters and transcriptional programming of inner mass stem cells and neuron progenitors during embryogenesis. Required for H3K4me1 mark at stalled replication forks. Mediates FANCD2-dependent nucleosome remodeling and RAD51 nucleofilaments stabilization at reversed forks, protecting them from nucleolytic degradation. Does not methylate 'Lys-4' of histone H3 if the neighboring 'Lys-9' residue is already methylated. Has RNA binding activity towards transcripts involved in RNA processing and the DNA damage response. The polypeptide is Histone-lysine N-methyltransferase SETD1A (Setd1a) (Mus musculus (Mouse)).